The primary structure comprises 347 residues: MNPLTLIIIMFTLFMGTMITVFSSHWLTMWIGLEMNMLAIIPILINKATPRSTEAATKYFLTQATASMILMMAITLNILDSGQWTLINPQNQLTPVLITLALIIKLGMAPFHFWVPEVTQGVPLKSGLILLTWQKLAPLSILYQISPSINPTMMMSVAILSIMVGGWGGLNQTQLRKILAYSSIAHMGWMAAIITFNPNTMVLNLIIYILMTIPMFMMFMQHSSTTTLSLSQMWNKNPLMVSTILITLMSLGGLPPLTGFIPKWIIIQELTKNGNIILPTAMAMLALLNLYFYMRLIYSSSLTMFPTTNNLKMKWQFESTKRMPLITPLIILSTMLLPLTPALSVLN.

The next 10 helical transmembrane spans lie at 3–23 (PLTL…TVFS), 59–79 (YFLT…LNIL), 95–115 (PVLI…HFWV), 127–147 (GLIL…QISP), 149–169 (INPT…GWGG), 178–198 (ILAY…TFNP), 200–220 (TMVL…MMFM), 241–261 (VSTI…TGFI), 274–294 (GNII…YFYM), and 325–345 (LITP…ALSV).

This sequence belongs to the complex I subunit 2 family. In terms of assembly, core subunit of respiratory chain NADH dehydrogenase (Complex I) which is composed of 45 different subunits. Interacts with TMEM242.

It is found in the mitochondrion inner membrane. The enzyme catalyses a ubiquinone + NADH + 5 H(+)(in) = a ubiquinol + NAD(+) + 4 H(+)(out). Its function is as follows. Core subunit of the mitochondrial membrane respiratory chain NADH dehydrogenase (Complex I) which catalyzes electron transfer from NADH through the respiratory chain, using ubiquinone as an electron acceptor. Essential for the catalytic activity and assembly of complex I. This Oryctolagus cuniculus (Rabbit) protein is NADH-ubiquinone oxidoreductase chain 2.